A 219-amino-acid polypeptide reads, in one-letter code: UPF0073 inner membrane protein YqfA (219 aa).

Residues 1–23 are Cytoplasmic-facing; that stretch reads MVQKPLIKQGYSLAEEIANSVSH. A helical transmembrane segment spans residues 24 to 44; it reads GIGLVFGIVGLVLLLVQAVDL. Topologically, residues 45 to 53 are periplasmic; it reads NASATAITS. Residues 54-74 traverse the membrane as a helical segment; sequence YSLYGGSMILLFLASTLYHAI. Residues 75–90 are Cytoplasmic-facing; sequence PHQRAKMWLKKFDHCA. Residues 91 to 111 traverse the membrane as a helical segment; the sequence is IYLLIAGTYTPFLLVGLDSPL. Residues 112-113 are Periplasmic-facing; that stretch reads AR. The chain crosses the membrane as a helical span at residues 114–134; that stretch reads GLMIVIWSLALLGILFKLTIA. At 135-138 the chain is on the cytoplasmic side; the sequence is HRFK. A helical transmembrane segment spans residues 139 to 159; that stretch reads ILSLVTYLAMGWLSLVVIYEM. At 160–165 the chain is on the periplasmic side; the sequence is AVKLAA. Residues 166 to 186 form a helical membrane-spanning segment; the sequence is GSVTLLAVGGVVYSLGVIFYV. The Cytoplasmic segment spans residues 187–195; that stretch reads CKRIPYNHA. The helical transmembrane segment at 196–216 threads the bilayer; the sequence is IWHGFVLGGSVCHFLAIYLYI. The Periplasmic segment spans residues 217–219; it reads GQA.

It belongs to the UPF0073 (Hly-III) family.

It is found in the cell inner membrane. This is UPF0073 inner membrane protein YqfA (yqfA) from Escherichia coli O157:H7.